We begin with the raw amino-acid sequence, 152 residues long: Transcriptional regulator MraZ (152 aa).

2 consecutive SpoVT-AbrB domains span residues Ala-5–Glu-52 and Ala-81–Thr-124.

Belongs to the MraZ family. As to quaternary structure, forms oligomers.

The protein resides in the cytoplasm. Its subcellular location is the nucleoid. Functionally, negatively regulates its own expression and that of the subsequent genes in the proximal part of the division and cell wall (dcw) gene cluster. Acts by binding directly to DNA. May also regulate the expression of genes outside the dcw cluster. This chain is Transcriptional regulator MraZ, found in Serratia proteamaculans (strain 568).